Reading from the N-terminus, the 149-residue chain is Large ribosomal subunit protein eL19 (149 aa).

The segment at 46–99 (EDGTIEAKTAKGNSRGRARKRQQKRAYGHKKGHGSRKGRSGGRQNEKEDWQSRI) is disordered. The span at 59 to 85 (SRGRARKRQQKRAYGHKKGHGSRKGRS) shows a compositional bias: basic residues. Over residues 89–99 (QNEKEDWQSRI) the composition is skewed to basic and acidic residues.

It belongs to the eukaryotic ribosomal protein eL19 family. In terms of assembly, part of the 50S ribosomal subunit.

Functionally, binds to the 23S rRNA. The sequence is that of Large ribosomal subunit protein eL19 from Natronomonas pharaonis (strain ATCC 35678 / DSM 2160 / CIP 103997 / JCM 8858 / NBRC 14720 / NCIMB 2260 / Gabara) (Halobacterium pharaonis).